The sequence spans 172 residues: Large ribosomal subunit protein bL17 (172 aa).

Positions 127–172 (KAAKQDRAKRVKGSKKVTGDVAPAVAPVPSAPAETQEEAKAPESAE) are disordered. Low complexity predominate over residues 147 to 159 (VAPAVAPVPSAPA). A compositionally biased stretch (basic and acidic residues) spans 163–172 (EEAKAPESAE).

This sequence belongs to the bacterial ribosomal protein bL17 family. In terms of assembly, part of the 50S ribosomal subunit. Contacts protein L32.

In Chlorobium luteolum (strain DSM 273 / BCRC 81028 / 2530) (Pelodictyon luteolum), this protein is Large ribosomal subunit protein bL17.